A 71-amino-acid polypeptide reads, in one-letter code: Protein SlyX homolog (71 aa).

Belongs to the SlyX family.

The chain is Protein SlyX homolog from Thioalkalivibrio sulfidiphilus (strain HL-EbGR7).